Here is a 1614-residue protein sequence, read N- to C-terminus: Chitin synthase csmA (1614 aa).

The disordered stretch occupies residues 1-22 (MAGPAPSGRTPSHAQSSLPSLP). Positions 1–788 (MAGPAPSGRT…CWADLAKLGE (788 aa)) constitute a Myosin motor domain. Residues 9 to 19 (RTPSHAQSSLP) show a composition bias toward polar residues. An ATP-binding site is contributed by 105 to 112 (GESGSGKT). Positions 600 to 650 (QVSSKPMRMPSMARRKAGPSRLAFDAPEGDDQDEYDSQAGSMSKSSARRKS) are disordered. Residues 626 to 635 (PEGDDQDEYD) are compositionally biased toward acidic residues. Positions 668–692 (LDIVSKCLNSANLNPYFVFCLKPND) are actin-binding. 2 helical membrane passes run 898-918 (WMAI…KTFG) and 937-957 (LIIW…PGLI). Residues 961–1020 (QHVYSTAELSSHNGKDGHNSFVAIRGIVFNLDKFMPSHYPDIVPEKSLKKYAGTDATGLF) form the Cytochrome b5 heme-binding domain. N-linked (GlcNAc...) asparagine glycans are attached at residues Asn1047 and Asn1072. Residues 1209 to 1229 (FILAISIFICLIVVFKFLAAL) traverse the membrane as a helical segment. Residue Asn1572 is glycosylated (N-linked (GlcNAc...) asparagine).

This sequence in the N-terminal section; belongs to the TRAFAC class myosin-kinesin ATPase superfamily. Myosin family. In the C-terminal section; belongs to the chitin synthase family. Class V subfamily.

It localises to the cell membrane. The protein localises to the cell septum. Its subcellular location is the cell tip. It catalyses the reaction [(1-&gt;4)-N-acetyl-beta-D-glucosaminyl](n) + UDP-N-acetyl-alpha-D-glucosamine = [(1-&gt;4)-N-acetyl-beta-D-glucosaminyl](n+1) + UDP + H(+). Its function is as follows. Polymerizes chitin, a structural polymer of the cell wall and septum, by transferring the sugar moiety of UDP-GlcNAc to the non-reducing end of the growing chitin polymer. Acts as the major chitin synthase in Aspergillus niger involved in cell wall integrity which is principally responsible for chitin synthesis at the lateral cell wall. Plays an important role in septal growth or maintenance. Mediates colony spore formation. The sequence is that of Chitin synthase csmA from Aspergillus niger (strain ATCC MYA-4892 / CBS 513.88 / FGSC A1513).